Here is a 362-residue protein sequence, read N- to C-terminus: Cell death regulator Aven (362 aa).

Disordered regions lie at residues 1–111 (MQAE…NYSK), 214–237 (VKPK…GPGG), and 253–362 (VLLG…SMIS). Basic residues predominate over residues 8–17 (RGGRGRRPGR). Gly residues predominate over residues 37–47 (RGGGGGGGGDG). Positions 50–60 (RRGRGRGRGFR) are enriched in basic residues. Over residues 61-72 (GARGGRGGGGAP) the composition is skewed to gly residues. Residues 90–105 (VEDDSDAETYGEENDE) are compositionally biased toward acidic residues. Phosphoserine is present on Ser-94. Lys-230 carries the N6-methyllysine modification. Residues 350 to 362 (EEELEDWLDSMIS) show a composition bias toward acidic residues.

As to quaternary structure, binds Apaf-1, BCL-2 and BAD (Bcl-xl). In terms of tissue distribution, highly expressed in testis, ovary, thymus, prostate, spleen, small intestine, colon, heart, skeletal muscle, liver, kidney and pancreas.

It localises to the endomembrane system. In terms of biological role, protects against apoptosis mediated by Apaf-1. This Homo sapiens (Human) protein is Cell death regulator Aven (AVEN).